The sequence spans 113 residues: Large ribosomal subunit protein uL24 (113 aa).

This sequence belongs to the universal ribosomal protein uL24 family. In terms of assembly, part of the 50S ribosomal subunit.

One of two assembly initiator proteins, it binds directly to the 5'-end of the 23S rRNA, where it nucleates assembly of the 50S subunit. Its function is as follows. One of the proteins that surrounds the polypeptide exit tunnel on the outside of the subunit. This is Large ribosomal subunit protein uL24 from Synechococcus sp. (strain RCC307).